We begin with the raw amino-acid sequence, 395 residues long: Protein SGT1 (395 aa).

Lys32 is covalently cross-linked (Glycyl lysine isopeptide (Lys-Gly) (interchain with G-Cter in ubiquitin)). A disordered region spans residues 137–175 (KKNKKQKDSTNKHTIKPVESIENRGDNNSSHSPISPLKI). Phosphoserine is present on residues Ser168 and Ser171. Residues 182–277 (SPKFKIDWYQ…IDSTQWKKLE (96 aa)) enclose the CS domain. The SGS domain occupies 312–395 (SYPSSSKKKI…PPEGMEPKHW (84 aa)). Positions 373-395 (DWEDVSKGTVKTSPPEGMEPKHW) are disordered.

This sequence belongs to the SGT1 family. As to quaternary structure, interacts with SKP1/CBF3D. Part of SCF E3 ubiquitin ligase complexes containing SKP1, CDC53, HRT1 and some F-box proteins. Interacts with CIR1/CDC35.

Functionally, involved in ubiquitination and subsequent proteasomal degradation of target proteins. Required for both entry into S phase and kinetochore function. Also involved in cyclic AMP (cAMP) pathway, possibly by participating in the assembly or the conformational activation of specific multiprotein complexes. In Saccharomyces cerevisiae (strain ATCC 204508 / S288c) (Baker's yeast), this protein is Protein SGT1.